The sequence spans 718 residues: Amino-acid acetyltransferase, mitochondrial (718 aa).

A mitochondrion-targeting transit peptide spans 1-36; that stretch reads MNPNAVWPRTAQSSLKKHQVSLCTCQRRSHYRLRSF. Residues 97 to 116 form a disordered region; the sequence is QHQPDLPQKPTSAPASTAKI. The N-acetyltransferase domain occupies 539 to 708; that stretch reads RQPRLRLDDP…YEAVCRSIQP (170 aa).

Belongs to the acetyltransferase family.

It is found in the mitochondrion. The enzyme catalyses L-glutamate + acetyl-CoA = N-acetyl-L-glutamate + CoA + H(+). The protein operates within amino-acid biosynthesis; L-arginine biosynthesis; N(2)-acetyl-L-ornithine from L-glutamate: step 1/4. N-acetylglutamate synthase involved in arginine biosynthesis. The protein is Amino-acid acetyltransferase, mitochondrial (arg2) of Aspergillus clavatus (strain ATCC 1007 / CBS 513.65 / DSM 816 / NCTC 3887 / NRRL 1 / QM 1276 / 107).